We begin with the raw amino-acid sequence, 345 residues long: Ephrin-B1 (345 aa).

The N-terminal stretch at M1–L24 is a signal peptide. Over A25–K236 the chain is Extracellular. The Ephrin RBD domain maps to K30–V164. 2 disulfides stabilise this stretch: C64/C101 and C89/C153. N-linked (GlcNAc...) asparagine glycosylation is present at N139. The segment at N169–G227 is disordered. Positions S204–S217 are enriched in basic and acidic residues. The helical transmembrane segment at V237–L257 threads the bilayer. Over T258–V345 the chain is Cytoplasmic. The short motif at V259–T272 is the Nuclear localization signal element. The tract at residues L262–T293 is interaction with ZHX2. S280 and S286 each carry phosphoserine. The PDZ-binding motif lies at Y343 to V345.

It belongs to the ephrin family. As to quaternary structure, interacts (via PDZ-binding motif) with GRIP1 and GRIP2 (via PDZ domain 6). Interacts with TLE1. The intracellular domain peptide interacts with ZHX2; the interaction enhances ZHX2 transcriptional repression activity. Inducible phosphorylation of tyrosine residues in the cytoplasmic domain. Post-translationally, proteolytically processed. The ectodomain is cleaved, probably by a metalloprotease, to produce a membrane-tethered C-terminal fragment. This fragment is then further processed by the gamma-secretase complex to yield a soluble intracellular domain peptide which can translocate to the nucleus. The intracellular domain peptide is highly labile suggesting that it is targeted for degradation by the proteasome. As to expression, expressed on lateral floor plate cells, specifically on commissural axon segments that have passed through the floor plate. Expressed in cells of the retinal ganglion cell layer during retinal axon guidance to the optic disk. Expressed in myogenic progenitor cells.

The protein localises to the cell membrane. Its subcellular location is the membrane raft. The protein resides in the nucleus. Its function is as follows. Cell surface transmembrane ligand for Eph receptors, a family of receptor tyrosine kinases which are crucial for migration, repulsion and adhesion during neuronal, vascular and epithelial development. Binding to Eph receptors residing on adjacent cells leads to contact-dependent bidirectional signaling into neighboring cells. Shows high affinity for the receptor tyrosine kinase EPHB1/ELK. Can also bind EPHB2 and EPHB3. Binds to, and induces the collapse of, commissural axons/growth cones in vitro. May play a role in constraining the orientation of longitudinally projecting axons. In Mus musculus (Mouse), this protein is Ephrin-B1 (Efnb1).